Consider the following 146-residue polypeptide: Neuropeptide Y receptor type 2 (146 aa).

Topologically, residues 1 to 8 are extracellular; sequence KMGPVLCH. An intrachain disulfide couples Cys-7 to Cys-87. Residues 9 to 29 form a helical membrane-spanning segment; that stretch reads LVPYAQGLAVQVSTITLTVIA. Over 30–49 the chain is Cytoplasmic; sequence LDRHRCIVYHLESKISKQIS. The chain crosses the membrane as a helical span at residues 50-70; it reads FLIIGLAWGVSALLASPLAIF. The Extracellular portion of the chain corresponds to 71–100; it reads REYSLIEIIPDFEIVACTEKWPGEEKGIYG. The helical transmembrane segment at 101–121 threads the bilayer; that stretch reads TVYSLLSLLILYVLPLGIISF. The Cytoplasmic segment spans residues 122–146; that stretch reads SYARIWSKLKNHVSPGAAHDHYHQR.

The protein belongs to the G-protein coupled receptor 1 family.

The protein localises to the cell membrane. Receptor for neuropeptide Y and peptide YY. In Ovis aries (Sheep), this protein is Neuropeptide Y receptor type 2 (NPY2R).